We begin with the raw amino-acid sequence, 196 residues long: MTQPIKLLVGLANPGPEYAKTRHNAGAWVVEELARVHNVTLKNEPKFFGLTGRIMVNGQDLRLLIPTTFMNLSGKAIAALAKFYQIKPEEIMVAHDELDLLPGVAKFKKGGGHGGHNGLRDTISKLGNNKDFYRLRIGIGHPGHKDKVAGFVLGKAPAKEQELLDAAADESVRCLDILIKDGLSKAQNRLHTFKAE.

Tyrosine 18 contacts tRNA. Histidine 23 (proton acceptor) is an active-site residue. Positions 69, 71, and 117 each coordinate tRNA.

Belongs to the PTH family. Monomer.

Its subcellular location is the cytoplasm. It carries out the reaction an N-acyl-L-alpha-aminoacyl-tRNA + H2O = an N-acyl-L-amino acid + a tRNA + H(+). Its function is as follows. Hydrolyzes ribosome-free peptidyl-tRNAs (with 1 or more amino acids incorporated), which drop off the ribosome during protein synthesis, or as a result of ribosome stalling. Catalyzes the release of premature peptidyl moieties from peptidyl-tRNA molecules trapped in stalled 50S ribosomal subunits, and thus maintains levels of free tRNAs and 50S ribosomes. The polypeptide is Peptidyl-tRNA hydrolase (Vibrio campbellii (strain ATCC BAA-1116)).